The primary structure comprises 419 residues: Phosphatidylcholine:ceramide cholinephosphotransferase 1 (419 aa).

The region spanning tryptophan 13–glutamate 76 is the SAM domain. Residue serine 14 is modified to Phosphoserine. 5 helical membrane-spanning segments follow: residues phenylalanine 142 to valine 162, phenylalanine 190 to leucine 210, phenylalanine 221 to leucine 241, methionine 282 to isoleucine 302, and leucine 310 to leucine 330. Residue histidine 291 is part of the active site. Residues alanine 331–threonine 419 lie on the Cytoplasmic side of the membrane. Residues histidine 334 and aspartate 338 contribute to the active site.

Belongs to the sphingomyelin synthase family. Isoform 1 is widely expressed, isoform 2 shows a more narrow distribution and isoform 3 is detected only in testis and heart.

It localises to the golgi apparatus membrane. It catalyses the reaction an N-acylsphing-4-enine + a 1,2-diacyl-sn-glycero-3-phosphocholine = a sphingomyelin + a 1,2-diacyl-sn-glycerol. The enzyme catalyses 1-(9Z-octadecenoyl)-2-acyl-sn-3-glycerol + a sphingomyelin = a 1-(9Z-octadecenoyl)-2-acyl-sn-glycero-3-phosphocholine + an N-acylsphing-4-enine. It carries out the reaction N-hexadecanoylsphinganine + a 1,2-diacyl-sn-glycero-3-phosphocholine = N-hexadecanoyl-sphinganine-1-phosphocholine + a 1,2-diacyl-sn-glycerol. The catalysed reaction is N-hexadecanoyl-(4R)-hydroxysphinganine + a 1,2-diacyl-sn-glycero-3-phosphocholine = N-hexadecanoyl-(4R)-hydroxysphinganine-phosphocholine + a 1,2-diacyl-sn-glycerol. It catalyses the reaction an N-acylsphing-4-enine + a 1,2-diacyl-sn-glycero-3-phosphoethanolamine = an N-acylsphing-4-enine 1-phosphoethanolamine + a 1,2-diacyl-sn-glycerol. Its pathway is sphingolipid metabolism. Functionally, major sphingomyelin synthase at the Golgi apparatus. Catalyzes the reversible transfer of phosphocholine moiety in sphingomyelin biosynthesis: in the forward reaction transfers phosphocholine head group of phosphatidylcholine (PC) on to ceramide (CER) to form ceramide phosphocholine (sphingomyelin, SM) and diacylglycerol (DAG) as by-product, and in the reverse reaction transfers phosphocholine from SM to DAG to form PC and CER. The direction of the reaction depends on the levels of CER and DAG in Golgi membranes. Converts the newly synthesized CER, that is transported from the endoplasmic reticulum to the trans-Golgi by the Cer transport protein (CERT), to SM. Can form a heteromeric complex with glucosylceramide synthase (GCS) increasing SMS activity and reducing glucosylceramide synthesis, a critical mechanism that controls the metabolic fate of CER in the Golgi. Does not use free phosphorylcholine or CDP-choline as donor. Can also transfer phosphoethanolamine head group of phosphatidylethanolamine (PE) on to CER to form ceramide phosphoethanolamine (CPE). Regulates receptor-mediated signal transduction via mitogenic DAG and proapoptotic CER, as well as via SM, a structural component of membrane rafts that serve as platforms for signal transduction and protein sorting. Plays a role in secretory transport via regulation of DAG pool at the Golgi apparatus and its downstream effects on PRKD1. (Microbial infection) Contributes to the brain SM production for Japanese encephalitis virus attachment and infection. The sequence is that of Phosphatidylcholine:ceramide cholinephosphotransferase 1 (Sgms1) from Mus musculus (Mouse).